A 281-amino-acid chain; its full sequence is Nucleotide-binding protein MADE_1004170 (281 aa).

8–15 serves as a coordination point for ATP; it reads GRSGSGKS. A GTP-binding site is contributed by 56–59; it reads DVRN.

It belongs to the RapZ-like family.

In terms of biological role, displays ATPase and GTPase activities. In Alteromonas mediterranea (strain DSM 17117 / CIP 110805 / LMG 28347 / Deep ecotype), this protein is Nucleotide-binding protein MADE_1004170.